The primary structure comprises 193 residues: Ribosomal RNA large subunit methyltransferase E (193 aa).

Residues Gly-48, Phe-50, Asp-67, Asn-85, and Asp-107 each coordinate S-adenosyl-L-methionine. Residue Lys-147 is the Proton acceptor of the active site.

Belongs to the class I-like SAM-binding methyltransferase superfamily. RNA methyltransferase RlmE family.

The protein resides in the cytoplasm. The enzyme catalyses uridine(2552) in 23S rRNA + S-adenosyl-L-methionine = 2'-O-methyluridine(2552) in 23S rRNA + S-adenosyl-L-homocysteine + H(+). Functionally, specifically methylates the uridine in position 2552 of 23S rRNA at the 2'-O position of the ribose in the fully assembled 50S ribosomal subunit. The chain is Ribosomal RNA large subunit methyltransferase E from Borrelia duttonii (strain Ly).